We begin with the raw amino-acid sequence, 499 residues long: MSDTVKVGFVPLSTAPRGILVAFCDESLRLGAATDKALGGAAELIQRAAAAARFKGKDGAVLDLLAPQGIKIQRLLVIGTGKSGDHKEKDFLKYGGTLAGKLNAGTEPVMVMAELPSGPMTPDQASSLAAGIRLRAYRFDRYKTKKKDEEAAVSAAISLAVADVAAAKKAFAPRSHVTDGVILARDLVNEPPNVLYPEEFAKRASALRKLGVTVEILDVPAMKKLGMGALLGVGQGSARPSRTVVMRYNGGKKGDQPVAFIGKGVCFDTGGISIKPAGSMEDMKGDMGGAACVVGLMHALAARKAKANVIGAIGLVENMPDGNAQRPGDIVTSMSGQTIEIINTDAEGRLVLADVLWYVATKFKPKFMIDLATLTGAIMVALGTEHAGLFANNDDLAEKLLKAGQETGEKVWRMPLGPEYDKLIDSQFADMKNTGGRHGGSITAAQFLQRFVSDTPWAHLDIAGTAMGAPKSEVNQSWGSGYGVRLLDRLVWDCYEARS.

Mn(2+) contacts are provided by Lys263 and Asp268. Lys275 is a catalytic residue. 3 residues coordinate Mn(2+): Asp286, Asp345, and Glu347. Residue Arg349 is part of the active site.

The protein belongs to the peptidase M17 family. Requires Mn(2+) as cofactor.

Its subcellular location is the cytoplasm. The enzyme catalyses Release of an N-terminal amino acid, Xaa-|-Yaa-, in which Xaa is preferably Leu, but may be other amino acids including Pro although not Arg or Lys, and Yaa may be Pro. Amino acid amides and methyl esters are also readily hydrolyzed, but rates on arylamides are exceedingly low.. It catalyses the reaction Release of an N-terminal amino acid, preferentially leucine, but not glutamic or aspartic acids.. Presumably involved in the processing and regular turnover of intracellular proteins. Catalyzes the removal of unsubstituted N-terminal amino acids from various peptides. The sequence is that of Probable cytosol aminopeptidase from Bradyrhizobium sp. (strain BTAi1 / ATCC BAA-1182).